A 398-amino-acid chain; its full sequence is Carbamoyl phosphate synthase large chain (398 aa).

One can recognise an ATP-grasp domain in the interval 1–187; that stretch reads KLGVPQPEGG…LAKIAAKVIV (187 aa). The carbamoyl phosphate synthetic domain stretch occupies residues 1–255; the sequence is KLGVPQPEGG…YKAELAADNV (255 aa). Positions 32, 71, 73, 78, 103, 104, 105, 106, 146, and 158 each coordinate ATP. Positions 146, 158, and 160 each coordinate Mg(2+). Mn(2+) is bound by residues Gln146, Glu158, and Asn160. Residues 254-395 form the MGS-like domain; the sequence is NVLPLTGKVF…NEYHKEMEEE (142 aa). The allosteric domain stretch occupies residues 256–398; that stretch reads LPLTGKVFLS…HKEMEEENKV (143 aa).

This sequence belongs to the CarB family. In terms of assembly, composed of two chains; the small (or glutamine) chain promotes the hydrolysis of glutamine to ammonia, which is used by the large (or ammonia) chain to synthesize carbamoyl phosphate. Tetramer of heterodimers (alpha,beta)4. Mg(2+) serves as cofactor. The cofactor is Mn(2+).

The catalysed reaction is hydrogencarbonate + L-glutamine + 2 ATP + H2O = carbamoyl phosphate + L-glutamate + 2 ADP + phosphate + 2 H(+). The enzyme catalyses hydrogencarbonate + NH4(+) + 2 ATP = carbamoyl phosphate + 2 ADP + phosphate + 2 H(+). The protein operates within amino-acid biosynthesis; L-arginine biosynthesis; carbamoyl phosphate from bicarbonate: step 1/1. Its pathway is pyrimidine metabolism; UMP biosynthesis via de novo pathway; (S)-dihydroorotate from bicarbonate: step 1/3. Functionally, large subunit of the glutamine-dependent carbamoyl phosphate synthetase (CPSase). CPSase catalyzes the formation of carbamoyl phosphate from the ammonia moiety of glutamine, carbonate, and phosphate donated by ATP, constituting the first step of 2 biosynthetic pathways, one leading to arginine and/or urea and the other to pyrimidine nucleotides. The large subunit (synthetase) binds the substrates ammonia (free or transferred from glutamine from the small subunit), hydrogencarbonate and ATP and carries out an ATP-coupled ligase reaction, activating hydrogencarbonate by forming carboxy phosphate which reacts with ammonia to form carbamoyl phosphate. The sequence is that of Carbamoyl phosphate synthase large chain from Methanosarcina barkeri.